Reading from the N-terminus, the 567-residue chain is Beta-galactoside-specific lectin 2 (567 aa).

A signal peptide spans 1–33; that stretch reads MNARLASSRAWVWCFLMVGLVCGATAKAESKIN. An N-linked (GlcNAc...) asparagine glycan is attached at Asn-145. The active site involves Glu-198. Cystine bridges form between Cys-280-Cys-306 and Cys-322-Cys-341. A propeptide spans 288–301 (connecting peptide); sequence DVHNWPLVIRPVMV. Residues 309–439 form the Ricin B-type lectin 1 domain; it reads SEPTVRIVGR…DSLGQSWLAS (131 aa). Residue 324 to 326 participates in D-galactose binding; sequence DVR. Asn-362 carries N-linked (GlcNAc...) asparagine glycosylation. Cys-365 and Cys-382 are oxidised to a cystine. A glycan (N-linked (GlcNAc...) asparagine) is linked at Asn-440. In terms of domain architecture, Ricin B-type lectin 2 spans 443–566; it reads APREVTIYGF…GNPNQMWLPV (124 aa). 2 disulfide bridges follow: Cys-456–Cys-469 and Cys-495–Cys-512. 539–541 lines the D-galactose pocket; it reads DVR.

The protein belongs to the ribosome-inactivating protein family. Type 2 RIP subfamily. As to quaternary structure, disulfide-linked dimer of A and B chains.

The catalysed reaction is Endohydrolysis of the N-glycosidic bond at one specific adenosine on the 28S rRNA.. In terms of biological role, the A chain is responsible for inhibiting protein synthesis through the catalytic inactivation of 60S ribosomal subunits by removing adenine from position 4,324 of 28S rRNA. The B chain binds to cell receptors and probably facilitates the entry into the cell of the A chain; B chains are also responsible for cell agglutination (lectin activity). This chain is Beta-galactoside-specific lectin 2, found in Viscum album (European mistletoe).